Here is a 148-residue protein sequence, read N- to C-terminus: Transcription antitermination protein NusB (148 aa).

Belongs to the NusB family.

Functionally, involved in transcription antitermination. Required for transcription of ribosomal RNA (rRNA) genes. Binds specifically to the boxA antiterminator sequence of the ribosomal RNA (rrn) operons. The sequence is that of Transcription antitermination protein NusB from Desulfitobacterium hafniense (strain DSM 10664 / DCB-2).